Consider the following 423-residue polypeptide: Amino sugar nitrososynthase RubN8 (423 aa).

This sequence belongs to the acyl-CoA dehydrogenase family. FAD is required as a cofactor.

Its pathway is antibiotic biosynthesis. Nitrososynthase involved in the biosynthesis of rubradirin, an ansamycin antibiotic. In vitro, catalyzes the double-oxidation of TDP-L-epi-vancosamine to TDP-L-epi-vancosonitrose. In vivo, probably catalyzes the formation of D-rubranitrose, the nitro sugar moiety of rubradirin. The sequence is that of Amino sugar nitrososynthase RubN8 from Streptomyces rubradiris (Streptomyces achromogenes subsp. rubradiris).